Here is a 924-residue protein sequence, read N- to C-terminus: MAAIEPSGLHPGERDSSCPQEGIPRPSGSLELAQEYLQQFKVTMTQLQQIQASLLCSMEQALKGQDSPAPSVRMLPTYVRSTPHGTEQGDFLVLELGATGASLRVLWVTLTGTKEHSVETRSQEFVIPQEVILGAGQQLFDFAARCLSEFLDAYPVENQGLKLGFNFSFPCHQTGLDKSTLISWTKGFRCSGVEGQDVVQLLRDAIQRQGTYNIDVVAMVNDTVGTMMGCELGTRPCEVGLIVDTGTNACYMEEARHVAALDEDRGRTCVSIEWGSFYDEEALGPVLTTFDDALDHESLVPGAQRFEKMIGGLYLGELVRLVLVHLSQHGVLFGGCASPALLSQNSILLEHVAKMEDPATGIAHVHTVLQGLGLSPQASDAELVQRVCMAVCTRAAQLCASALAAVLSRLQHSREQQTLHVAVATGGRVFEWHPRFLCILKETVMLLAPECDVSFIPSVDGGGRGVAMVTAVAARLATHRRILEETLAPFQLSLEQLTAVQAQMREAMIRGLQGESSSLRMLPTYVRATPDGSERGDFLALDLGGTNFRVLLVRVAEGSVQITNQVYSIPEYVAQGSGQKLFDHIVDCIVDFQKRQGLSGQSLPLGFTFSFPCKQLGLDQGILLNWTKGFNASGCEGQDVVYLLREAIRRRQAVELNVVAIVNDTVGTMMSCGYDDPCCEMGLIVGTGTNACYMEELRNVASVPGDSGHMCINMEWGAFGDDGSLSMLGTCFDASVDQASINPGKQRFEKMISGMYLGEIVRHILLHLTSLGVLFRGQKTQCLQTRDIFKTKFLSEIESDSLALRQVRAILEDLGLTLTSDDALMVLEVCQAVSRRAAQLCGAGVAAVVEKIRENRGLQELTVSVGVDGTLYKLHPHFSRLVSVTVRKLAPQCTVTFLQSEDGSGKGAALVTRVACRLTQMACV.

Residues 1-27 are disordered; that stretch reads MAAIEPSGLHPGERDSSCPQEGIPRPS. Hexokinase domains lie at 27-471 and 477-913; these read SGSL…MVTA and ATHR…LVTR. Positions 84–220 are hexokinase small subdomain 1; sequence HGTEQGDFLV…TYNIDVVAMV (137 aa). 95-102 contributes to the ATP binding site; that stretch reads ELGATGAS. 95–104 is a binding site for D-glucose 6-phosphate; that stretch reads ELGATGASLR. D-glucose contacts are provided by residues Ser168, 185 to 186, and 221 to 222; these read TK and ND. Residues 221–460 form a hexokinase large subdomain 1 region; it reads NDTVGTMMGC…CDVSFIPSVD (240 aa). 2 residues coordinate D-glucose 6-phosphate: Asp222 and Thr245. D-glucose-binding positions include Asn248, Glu273, and 304–307; that span reads QRFE. Position 426–428 (426–428) interacts with D-glucose 6-phosphate; the sequence is GGR. ATP contacts are provided by residues 438–439 and 542–547; these read CI and DLGGTN. The hexokinase small subdomain 2 stretch occupies residues 531–662; the sequence is DGSERGDFLA…AVELNVVAIV (132 aa). 542-546 lines the D-glucose 6-phosphate pocket; the sequence is DLGGT. D-glucose contacts are provided by residues 610 to 611, 627 to 628, and 663 to 664; these read SF, TK, and ND. The hexokinase large subdomain 2 stretch occupies residues 663 to 902; that stretch reads NDTVGTMMSC…CTVTFLQSED (240 aa). D-glucose 6-phosphate is bound by residues Asp664 and Thr687. Residue Thr687 coordinates ATP. Residues 689-690, Glu715, and Glu749 each bind D-glucose; that span reads TN. ATP contacts are provided by residues 754–755, 791–795, and 870–874; these read GM, TKFLS, and TLYKL. D-glucose 6-phosphate-binding positions include 868–870 and Ser904; that span reads DGT.

Belongs to the hexokinase family.

The enzyme catalyses a D-hexose + ATP = a D-hexose 6-phosphate + ADP + H(+). It carries out the reaction D-fructose + ATP = D-fructose 6-phosphate + ADP + H(+). It catalyses the reaction D-glucose + ATP = D-glucose 6-phosphate + ADP + H(+). It participates in carbohydrate metabolism; hexose metabolism. It functions in the pathway carbohydrate degradation; glycolysis; D-glyceraldehyde 3-phosphate and glycerone phosphate from D-glucose: step 1/4. Its activity is regulated as follows. Hexokinase is an allosteric enzyme inhibited by its product D-glucose 6-phosphate. Its function is as follows. Catalyzes the phosphorylation of hexose, such as D-glucose and D-fructose, to hexose 6-phosphate (D-glucose 6-phosphate and D-fructose 6-phosphate, respectively). Mediates the initial step of glycolysis by catalyzing phosphorylation of D-glucose to D-glucose 6-phosphate. This Rattus norvegicus (Rat) protein is Hexokinase-3.